The following is a 123-amino-acid chain: Small ribosomal subunit protein uS12 (123 aa).

Residues 1–21 (MPTIEQLVRKGRQAKPKKSKT) are disordered. Residues 9 to 20 (RKGRQAKPKKSK) show a composition bias toward basic residues. Position 89 is a 3-methylthioaspartic acid (aspartate 89).

The protein belongs to the universal ribosomal protein uS12 family. Part of the 30S ribosomal subunit. Contacts proteins S8 and S17. May interact with IF1 in the 30S initiation complex.

In terms of biological role, with S4 and S5 plays an important role in translational accuracy. Its function is as follows. Interacts with and stabilizes bases of the 16S rRNA that are involved in tRNA selection in the A site and with the mRNA backbone. Located at the interface of the 30S and 50S subunits, it traverses the body of the 30S subunit contacting proteins on the other side and probably holding the rRNA structure together. The combined cluster of proteins S8, S12 and S17 appears to hold together the shoulder and platform of the 30S subunit. The chain is Small ribosomal subunit protein uS12 from Bifidobacterium adolescentis (strain ATCC 15703 / DSM 20083 / NCTC 11814 / E194a).